Consider the following 160-residue polypeptide: Allophycocyanin alpha chain (160 aa).

Asparagine 70 carries the post-translational modification N4-methylasparagine. Position 80 (cysteine 80) interacts with (2R,3E)-phycocyanobilin.

Belongs to the phycobiliprotein family. In terms of assembly, component of the phycobilisome. Heterodimer of an alpha and a beta chain. Contains one covalently linked phycocyanobilin chromophore.

It is found in the cellular thylakoid membrane. Light-harvesting photosynthetic bile pigment-protein from the phycobiliprotein complex. Allophycocyanin has a maximum absorption at approximately 650 nanometers. The sequence is that of Allophycocyanin alpha chain (apcA) from Anabaena cylindrica.